The sequence spans 254 residues: 5'/3'-nucleotidase SurE (254 aa).

A divalent metal cation is bound by residues Asp9, Asp10, Ser40, and Asn93.

The protein belongs to the SurE nucleotidase family. A divalent metal cation serves as cofactor.

Its subcellular location is the cytoplasm. The enzyme catalyses a ribonucleoside 5'-phosphate + H2O = a ribonucleoside + phosphate. It catalyses the reaction a ribonucleoside 3'-phosphate + H2O = a ribonucleoside + phosphate. The catalysed reaction is [phosphate](n) + H2O = [phosphate](n-1) + phosphate + H(+). Functionally, nucleotidase with a broad substrate specificity as it can dephosphorylate various ribo- and deoxyribonucleoside 5'-monophosphates and ribonucleoside 3'-monophosphates with highest affinity to 3'-AMP. Also hydrolyzes polyphosphate (exopolyphosphatase activity) with the preference for short-chain-length substrates (P20-25). Might be involved in the regulation of dNTP and NTP pools, and in the turnover of 3'-mononucleotides produced by numerous intracellular RNases (T1, T2, and F) during the degradation of various RNAs. The polypeptide is 5'/3'-nucleotidase SurE (Yersinia pseudotuberculosis serotype O:1b (strain IP 31758)).